The following is a 385-amino-acid chain: 8-amino-7-oxononanoate synthase (385 aa).

Arg-21 is a binding site for substrate. Residue 108-109 coordinates pyridoxal 5'-phosphate; sequence GF. Residue His-133 coordinates substrate. Pyridoxal 5'-phosphate-binding residues include Ser-179, His-207, and Thr-233. Lys-236 is subject to N6-(pyridoxal phosphate)lysine. Thr-352 serves as a coordination point for substrate.

The protein belongs to the class-II pyridoxal-phosphate-dependent aminotransferase family. BioF subfamily. Homodimer. It depends on pyridoxal 5'-phosphate as a cofactor.

The enzyme catalyses 6-carboxyhexanoyl-[ACP] + L-alanine + H(+) = (8S)-8-amino-7-oxononanoate + holo-[ACP] + CO2. It functions in the pathway cofactor biosynthesis; biotin biosynthesis. Its function is as follows. Catalyzes the decarboxylative condensation of pimeloyl-[acyl-carrier protein] and L-alanine to produce 8-amino-7-oxononanoate (AON), [acyl-carrier protein], and carbon dioxide. The chain is 8-amino-7-oxononanoate synthase from Klebsiella pneumoniae (strain 342).